Reading from the N-terminus, the 303-residue chain is MSFTVKVKEELLGLGTKSKSELAAIMKMSGSLGIASQGLTLSITTENAKIARHIYELLLSFYQVKSDIRHHQKTNLRKNRVYTVFLDEKVEDILSDLHLADAFFGIQEGIDPLILSDDEASRAYLRGAFLSNGSMRDPESGKYQLEIVSVYLDHAQGLASLMQRFLLDAKTIERKKGAVTYLQRAEDIMDFLIVVGAMEAMAEFEAVKILRETRNDLNRANNAETANIARTVTASMKTINNIVKIMETSGLENLPIDLQEVAHLRVNHPDYSIQQLADSLSKPLTKSGVNHRLRKINKIADEL.

A DNA-binding region (H-T-H motif) is located at residues 272–303; it reads SIQQLADSLSKPLTKSGVNHRLRKINKIADEL.

The protein belongs to the WhiA family.

Functionally, involved in cell division and chromosome segregation. This chain is Probable cell division protein WhiA, found in Streptococcus gordonii (strain Challis / ATCC 35105 / BCRC 15272 / CH1 / DL1 / V288).